A 287-amino-acid chain; its full sequence is Putative sugar uptake protein M6_Spy1874 (287 aa).

Helical transmembrane passes span 4-26, 33-50, 55-72, 85-107, 117-134, 154-171, 181-200, 207-229, 234-256, and 268-285; these read IFYA…KIGG, LGMT…WLIV, TLQL…WSIG, VSVA…GVLV, FVVG…FYFS, FRAL…AVLF, SVIL…FMSF, YVIK…LLAA, LAIA…ILFL, and VVTG…LGVV.

It belongs to the GRP transporter (TC 2.A.7.5) family.

The protein localises to the cell membrane. The polypeptide is Putative sugar uptake protein M6_Spy1874 (Streptococcus pyogenes serotype M6 (strain ATCC BAA-946 / MGAS10394)).